We begin with the raw amino-acid sequence, 236 residues long: 2-C-methyl-D-erythritol 4-phosphate cytidylyltransferase (236 aa).

It belongs to the IspD/TarI cytidylyltransferase family. IspD subfamily. As to quaternary structure, homodimer.

It catalyses the reaction 2-C-methyl-D-erythritol 4-phosphate + CTP + H(+) = 4-CDP-2-C-methyl-D-erythritol + diphosphate. Its pathway is isoprenoid biosynthesis; isopentenyl diphosphate biosynthesis via DXP pathway; isopentenyl diphosphate from 1-deoxy-D-xylulose 5-phosphate: step 2/6. Its function is as follows. Catalyzes the formation of 4-diphosphocytidyl-2-C-methyl-D-erythritol from CTP and 2-C-methyl-D-erythritol 4-phosphate (MEP). This Escherichia coli O17:K52:H18 (strain UMN026 / ExPEC) protein is 2-C-methyl-D-erythritol 4-phosphate cytidylyltransferase.